The sequence spans 79 residues: MDTIENLIIAIVKPLISQPDALTIKIEDTPEFLEYHLNLDQSDVGRVIGRKGRTISAIRTIVYSVPTEYKKVRIVIDEK.

Residues 32-79 (FLEYHLNLDQSDVGRVIGRKGRTISAIRTIVYSVPTEYKKVRIVIDEK) form the KH domain.

This sequence belongs to the KhpA RNA-binding protein family. As to quaternary structure, forms a complex with KhpB. KhpA and KhpB colocalize throughout the cell cycle, with some increase at midcell in dividing cells.

It localises to the cytoplasm. Its function is as follows. A probable RNA chaperone. Forms a complex with KhpB which presumably binds to about 170 cellular RNAs (mRNA, tRNA intergenic RNA and sRNAs); the proteins alone each bind the same set of RNAs. A mutation in this gene suppresses the requirement for PBP2b (penA, a transpeptidase) in peripheral peptidoglycan (PG) synthesis. Probably plays a role in PG homeostasis and regulating peripheral PG synthesis. The polypeptide is RNA-binding protein KhpA (Streptococcus pneumoniae serotype 2 (strain D39 / NCTC 7466)).